The sequence spans 135 residues: Sex-regulated protein janus-A (135 aa).

Lysine 37 is a substrate binding site. The active-site Proton acceptor is the histidine 63. 104–106 (SQG) serves as a coordination point for substrate.

It belongs to the janus family.

In terms of biological role, janA and janB regulate somatic sex differentiation. This Drosophila mauritiana (Fruit fly) protein is Sex-regulated protein janus-A (janA).